The primary structure comprises 79 residues: Cell division protein ZapB (79 aa).

A coiled-coil region spans residues 6 to 78 (FEKLEVKVQQ…LRALLGKMEE (73 aa)).

Belongs to the ZapB family. As to quaternary structure, homodimer. The ends of the coiled-coil dimer bind to each other, forming polymers. Interacts with FtsZ.

Its subcellular location is the cytoplasm. Its function is as follows. Non-essential, abundant cell division factor that is required for proper Z-ring formation. It is recruited early to the divisome by direct interaction with FtsZ, stimulating Z-ring assembly and thereby promoting cell division earlier in the cell cycle. Its recruitment to the Z-ring requires functional FtsA or ZipA. This chain is Cell division protein ZapB, found in Yersinia pseudotuberculosis serotype O:1b (strain IP 31758).